Reading from the N-terminus, the 460-residue chain is MSTKEQVFFKQATSKNKIHFISLGCSRNLVDSEVMLGILLKAGYEATETLEEADYLILNTCAFLKAARDESKDYLQRIIKAKKESAKIILTGCMVSKHKEELKPWLPYIHYVLGSGDVEHILSAIESKEAGEKLTSKSYLEMGEIPRKLSTPKHYAYLKIAEGCRKRCAFCIIPTIKGGLRSKSLDQIIKEFRLLLKMGVKEIILIAQDLGDYGKDLSADRKSCLDSVLKEMLKEPGDYWIRMLYLYPDEVDDTIIDLMESDPRLLPYVDIPLQHINNRVLKSMLRTTSKEQILDLLTKLRTRIPHIYIRSSFIVGFPGETDEEFQDLVDFVSEGWIDNLGIFSYSQEEGSVAANMADQISQSVKSKRLKILSQTQKKNVEKHNKQLVGQIVEAVIDGYHPDSELLLTARFYGQAPEVDPCIIVNEARLVSGFGERYLIEITGYVGYDLVGRVIKKVPGE.

Residues Asn-16–Ala-130 enclose the MTTase N-terminal domain. [4Fe-4S] cluster contacts are provided by Cys-25, Cys-61, Cys-93, Cys-164, Cys-168, and Cys-171. A Radical SAM core domain is found at Ser-150–Lys-382. The region spanning Lys-385–Lys-455 is the TRAM domain.

The protein belongs to the methylthiotransferase family. RimO subfamily. The cofactor is [4Fe-4S] cluster.

The protein resides in the cytoplasm. It carries out the reaction L-aspartate(89)-[ribosomal protein uS12]-hydrogen + (sulfur carrier)-SH + AH2 + 2 S-adenosyl-L-methionine = 3-methylsulfanyl-L-aspartate(89)-[ribosomal protein uS12]-hydrogen + (sulfur carrier)-H + 5'-deoxyadenosine + L-methionine + A + S-adenosyl-L-homocysteine + 2 H(+). Catalyzes the methylthiolation of an aspartic acid residue of ribosomal protein uS12. This Chlamydia caviae (strain ATCC VR-813 / DSM 19441 / 03DC25 / GPIC) (Chlamydophila caviae) protein is Ribosomal protein uS12 methylthiotransferase RimO.